The sequence spans 448 residues: Signal recognition particle 54 kDa protein (448 aa).

GTP is bound by residues 107-114 (GIQGSGKT), 189-193 (DTAGR), and 247-250 (TKLD).

The protein belongs to the GTP-binding SRP family. SRP54 subfamily. As to quaternary structure, part of the signal recognition particle protein translocation system, which is composed of SRP and FtsY. Archaeal SRP consists of a 7S RNA molecule of 300 nucleotides and two protein subunits: SRP54 and SRP19.

The protein resides in the cytoplasm. The catalysed reaction is GTP + H2O = GDP + phosphate + H(+). In terms of biological role, involved in targeting and insertion of nascent membrane proteins into the cytoplasmic membrane. Binds to the hydrophobic signal sequence of the ribosome-nascent chain (RNC) as it emerges from the ribosomes. The SRP-RNC complex is then targeted to the cytoplasmic membrane where it interacts with the SRP receptor FtsY. The protein is Signal recognition particle 54 kDa protein of Thermococcus gammatolerans (strain DSM 15229 / JCM 11827 / EJ3).